The chain runs to 445 residues: Proline--tRNA ligase (445 aa).

It belongs to the class-II aminoacyl-tRNA synthetase family. ProS type 2 subfamily. As to quaternary structure, homodimer.

It localises to the cytoplasm. The catalysed reaction is tRNA(Pro) + L-proline + ATP = L-prolyl-tRNA(Pro) + AMP + diphosphate. In terms of biological role, catalyzes the attachment of proline to tRNA(Pro) in a two-step reaction: proline is first activated by ATP to form Pro-AMP and then transferred to the acceptor end of tRNA(Pro). The chain is Proline--tRNA ligase from Cereibacter sphaeroides (strain ATCC 17023 / DSM 158 / JCM 6121 / CCUG 31486 / LMG 2827 / NBRC 12203 / NCIMB 8253 / ATH 2.4.1.) (Rhodobacter sphaeroides).